The chain runs to 1173 residues: DNA-directed RNA polymerase subunit beta (1173 aa).

Residues Met1 to Asp23 form a disordered region. Residues Ala8–Thr22 are compositionally biased toward low complexity.

The protein belongs to the RNA polymerase beta chain family. In terms of assembly, the RNAP catalytic core consists of 2 alpha, 1 beta, 1 beta' and 1 omega subunit. When a sigma factor is associated with the core the holoenzyme is formed, which can initiate transcription.

The enzyme catalyses RNA(n) + a ribonucleoside 5'-triphosphate = RNA(n+1) + diphosphate. In terms of biological role, DNA-dependent RNA polymerase catalyzes the transcription of DNA into RNA using the four ribonucleoside triphosphates as substrates. The sequence is that of DNA-directed RNA polymerase subunit beta from Paenarthrobacter aurescens (strain TC1).